The sequence spans 252 residues: Ribonuclease HII (252 aa).

The 192-residue stretch at L41 to Q232 folds into the RNase H type-2 domain. Residues D47, E48, and D140 each coordinate a divalent metal cation.

This sequence belongs to the RNase HII family. The cofactor is Mn(2+). Mg(2+) serves as cofactor.

Its subcellular location is the cytoplasm. The enzyme catalyses Endonucleolytic cleavage to 5'-phosphomonoester.. Its function is as follows. Endonuclease that specifically degrades the RNA of RNA-DNA hybrids. This Xanthomonas oryzae pv. oryzae (strain KACC10331 / KXO85) protein is Ribonuclease HII.